A 370-amino-acid polypeptide reads, in one-letter code: 3-isopropylmalate dehydrogenase (370 aa).

76 to 89 (GPKWDQNPSELRPE) is a binding site for NAD(+). Substrate contacts are provided by arginine 96, arginine 106, arginine 134, and aspartate 224. 3 residues coordinate Mg(2+): aspartate 224, aspartate 248, and aspartate 252. An NAD(+)-binding site is contributed by 282-294 (GSAPDIAGQNIAN).

This sequence belongs to the isocitrate and isopropylmalate dehydrogenases family. LeuB type 1 subfamily. Homodimer. Mg(2+) is required as a cofactor. Requires Mn(2+) as cofactor.

The protein resides in the cytoplasm. The enzyme catalyses (2R,3S)-3-isopropylmalate + NAD(+) = 4-methyl-2-oxopentanoate + CO2 + NADH. It participates in amino-acid biosynthesis; L-leucine biosynthesis; L-leucine from 3-methyl-2-oxobutanoate: step 3/4. Its function is as follows. Catalyzes the oxidation of 3-carboxy-2-hydroxy-4-methylpentanoate (3-isopropylmalate) to 3-carboxy-4-methyl-2-oxopentanoate. The product decarboxylates to 4-methyl-2 oxopentanoate. The chain is 3-isopropylmalate dehydrogenase from Bacillus licheniformis (strain ATCC 14580 / DSM 13 / JCM 2505 / CCUG 7422 / NBRC 12200 / NCIMB 9375 / NCTC 10341 / NRRL NRS-1264 / Gibson 46).